The following is a 512-amino-acid chain: Phospho-2-dehydro-3-deoxyheptonate aldolase 2, chloroplastic (512 aa).

The N-terminal 57 residues, 1–57 (MALTATATTRGGSALPNSCLQTPKFQSLQKPTFISSFPTNKKTKPRTKHISAVQSPP), are a transit peptide targeting the chloroplast. The tract at residues 37–57 (FPTNKKTKPRTKHISAVQSPP) is disordered. Cys-126 is a Mn(2+) binding site. Substrate contacts are provided by residues Arg-165, 324–325 (ER), Lys-347, and Arg-378. The Mn(2+) site is built by His-410, Glu-452, and Asp-482.

The protein belongs to the class-II DAHP synthase family. Homodimer. The cofactor is Mn(2+). In terms of tissue distribution, mostly expressed in leaves and stems, and, to a lower extent, in roots, stigmas, anthers, petal tubes, petal limbs and sepals.

Its subcellular location is the plastid. The protein localises to the chloroplast. The enzyme catalyses D-erythrose 4-phosphate + phosphoenolpyruvate + H2O = 7-phospho-2-dehydro-3-deoxy-D-arabino-heptonate + phosphate. It participates in metabolic intermediate biosynthesis; chorismate biosynthesis; chorismate from D-erythrose 4-phosphate and phosphoenolpyruvate: step 1/7. In terms of biological role, involved in the production of volatile organic compounds (VOCs). Catalyzes an aldol-like condensation reaction between phosphoenolpyruvate (PEP) and D-erythrose 4-phosphate (E4P) to generate 3-deoxy-D-arabino-heptulosonate 7-phosphate (DAH7P) and inorganic phosphate. This chain is Phospho-2-dehydro-3-deoxyheptonate aldolase 2, chloroplastic, found in Petunia hybrida (Petunia).